Here is a 648-residue protein sequence, read N- to C-terminus: Spike protein P3 (648 aa).

Interacts with P6.

It localises to the virion membrane. Functionally, P3 protein is necessary for adsorption onto host cells. Attaches to a type IV pilus of the host. This Pseudomonas savastanoi pv. phaseolicola (Pseudomonas syringae pv. phaseolicola) protein is Spike protein P3 (P3).